The primary structure comprises 95 residues: Integration host factor subunit beta (95 aa).

Belongs to the bacterial histone-like protein family. Heterodimer of an alpha and a beta chain.

This protein is one of the two subunits of integration host factor, a specific DNA-binding protein that functions in genetic recombination as well as in transcriptional and translational control. In Shewanella putrefaciens (strain CN-32 / ATCC BAA-453), this protein is Integration host factor subunit beta.